The chain runs to 56 residues: Putative 2-Cys peroxiredoxin BAS1 (56 aa).

This sequence belongs to the peroxiredoxin family. AhpC/Prx1 subfamily. As to quaternary structure, homodimer; disulfide-linked, upon oxidation.

The protein resides in the plastid. It is found in the chloroplast. The catalysed reaction is a hydroperoxide + [thioredoxin]-dithiol = an alcohol + [thioredoxin]-disulfide + H2O. Thiol-specific peroxidase that catalyzes the reduction of hydrogen peroxide and organic hydroperoxides to water and alcohols, respectively. Plays a role in cell protection against oxidative stress by detoxifying peroxides. May be an antioxidant enzyme particularly in the developing shoot and photosynthesizing leaf. This chain is Putative 2-Cys peroxiredoxin BAS1, found in Pinus strobus (Eastern white pine).